A 24-amino-acid polypeptide reads, in one-letter code: Caerin-2.1 (24 aa).

Belongs to the frog skin active peptide (FSAP) family. Caerin subfamily. Expressed by the skin dorsal glands.

It is found in the secreted. Inhibits the formation of NO by neuronal nitric oxide synthase. The polypeptide is Caerin-2.1 (Litoria rothii (Roth's tree frog)).